Consider the following 200-residue polypeptide: Putative glucose-6-phosphate isomerase 2 (200 aa).

Fe cation-binding residues include H92, H94, E101, and H140.

The protein belongs to the archaeal-type GPI family. In terms of assembly, homodimer. Fe cation serves as cofactor.

The protein resides in the cytoplasm. The enzyme catalyses alpha-D-glucose 6-phosphate = beta-D-fructose 6-phosphate. It functions in the pathway carbohydrate degradation; glycolysis; D-glyceraldehyde 3-phosphate and glycerone phosphate from D-glucose: step 2/4. This chain is Putative glucose-6-phosphate isomerase 2 (pgiA2), found in Rhizobium meliloti (strain 1021) (Ensifer meliloti).